Consider the following 100-residue polypeptide: MVKRTHGYRYKSRKLLSKKPRERGVPGLSRLLYEYKPGDKVVIDVDPTFVSTAPHRRYQGKVGVVIGTRGRAYVIETYIGDKKKIIVTTPEHLKPFQGGS.

Belongs to the eukaryotic ribosomal protein eL21 family.

This is Large ribosomal subunit protein eL21 from Pyrobaculum arsenaticum (strain DSM 13514 / JCM 11321 / PZ6).